A 149-amino-acid polypeptide reads, in one-letter code: IQ domain-containing protein F5 (149 aa).

2 IQ domains span residues 12 to 41 (ENKAIVSIQAWWRGTLVRRTLLHAALRAWI) and 68 to 97 (QEWAVVKLQSWVRMWCIRLRYLRLLHAVRI).

The sequence is that of IQ domain-containing protein F5 (IQCF5) from Bos taurus (Bovine).